We begin with the raw amino-acid sequence, 254 residues long: Adenosylcobinamide-GDP ribazoletransferase (254 aa).

7 helical membrane passes run 27–47 (SSLYWFPVVGLVIGGIVVLFA), 50–70 (GMGAGWPELAAVLALLGGFIL), 104–124 (VGSFGSLALIGVMLFKWICLL), 131–151 (AYGMIAAGVVLSRTAQVLLAA), 170–190 (AGWPHLLVASVSGVVLLFVLL), 194–214 (VVPSSILLFGSVVALFFVGWL), and 233–253 (LVEIAVWFVAALWLKGLFSAI).

This sequence belongs to the CobS family. Requires Mg(2+) as cofactor.

The protein localises to the cell inner membrane. It carries out the reaction alpha-ribazole + adenosylcob(III)inamide-GDP = adenosylcob(III)alamin + GMP + H(+). The enzyme catalyses alpha-ribazole 5'-phosphate + adenosylcob(III)inamide-GDP = adenosylcob(III)alamin 5'-phosphate + GMP + H(+). It participates in cofactor biosynthesis; adenosylcobalamin biosynthesis; adenosylcobalamin from cob(II)yrinate a,c-diamide: step 7/7. Its function is as follows. Joins adenosylcobinamide-GDP and alpha-ribazole to generate adenosylcobalamin (Ado-cobalamin). Also synthesizes adenosylcobalamin 5'-phosphate from adenosylcobinamide-GDP and alpha-ribazole 5'-phosphate. The sequence is that of Adenosylcobinamide-GDP ribazoletransferase from Chlorobaculum parvum (strain DSM 263 / NCIMB 8327) (Chlorobium vibrioforme subsp. thiosulfatophilum).